The sequence spans 418 residues: Tryptophan synthase beta chain (418 aa).

Positions 1–17 are enriched in polar residues; the sequence is MTSTLPNASTPDPSSLQ. The interval 1 to 23 is disordered; sequence MTSTLPNASTPDPSSLQPAVRPG. The residue at position 111 (lysine 111) is an N6-(pyridoxal phosphate)lysine.

The protein belongs to the TrpB family. As to quaternary structure, tetramer of two alpha and two beta chains. Pyridoxal 5'-phosphate serves as cofactor.

The catalysed reaction is (1S,2R)-1-C-(indol-3-yl)glycerol 3-phosphate + L-serine = D-glyceraldehyde 3-phosphate + L-tryptophan + H2O. It functions in the pathway amino-acid biosynthesis; L-tryptophan biosynthesis; L-tryptophan from chorismate: step 5/5. The beta subunit is responsible for the synthesis of L-tryptophan from indole and L-serine. The sequence is that of Tryptophan synthase beta chain from Synechococcus sp. (strain CC9605).